A 151-amino-acid chain; its full sequence is Cyanate hydratase (151 aa).

Catalysis depends on residues R92, E95, and S118.

The protein belongs to the cyanase family.

The enzyme catalyses cyanate + hydrogencarbonate + 3 H(+) = NH4(+) + 2 CO2. Its function is as follows. Catalyzes the reaction of cyanate with bicarbonate to produce ammonia and carbon dioxide. This chain is Cyanate hydratase, found in Coprinopsis cinerea (strain Okayama-7 / 130 / ATCC MYA-4618 / FGSC 9003) (Inky cap fungus).